The following is a 771-amino-acid chain: Semaphorin-3A (771 aa).

The first 20 residues, 1–20 (MGWLTRIVCLFWGVLLTARA), serve as a signal peptide directing secretion. The Sema domain occupies 31–514 (RLKLSYKEML…STAGVAQLPL (484 aa)). Asn53 carries an N-linked (GlcNAc...) asparagine glycan. An intrachain disulfide couples Cys103 to Cys114. N-linked (GlcNAc...) asparagine glycosylation occurs at Asn125. Disulfide bonds link Cys132–Cys141, Cys269–Cys381, Cys293–Cys341, and Cys517–Cys535. The Ig-like C2-type domain occupies 580–664 (PEERIIYGVE…GFIQTLLKVT (85 aa)). A glycan (N-linked (GlcNAc...) asparagine) is linked at Asn590. Cysteines 649 and 722 form a disulfide. Over residues 728–737 (RDRKQRRQRP) the composition is skewed to basic residues. Residues 728 to 771 (RDRKQRRQRPGHTPGNSNKWKHLQENKKGRNRRTHEFERAPRSV) are disordered. The segment covering 749–771 (HLQENKKGRNRRTHEFERAPRSV) has biased composition (basic and acidic residues).

The protein belongs to the semaphorin family. As to quaternary structure, interacts with PLXND1. As to expression, expressed in the dorsal root ganglia.

The protein resides in the secreted. In terms of biological role, involved in the development of the olfactory system and in neuronal control of puberty. Induces the collapse and paralysis of neuronal growth cones. Could serve as a ligand that guides specific growth cones by a motility-inhibiting mechanism. Binds to the complex neuropilin-1/plexin-1. In Homo sapiens (Human), this protein is Semaphorin-3A (SEMA3A).